The primary structure comprises 527 residues: Peptidoglycan O-acetyltransferase (527 aa).

11 helical membrane-spanning segments follow: residues 11–31 (VFVL…VGFL), 55–75 (LFFY…SIVF), 96–116 (LILG…TDFF), 131–151 (LHLI…AYLM), 187–207 (HFLD…GPIV), 228–248 (NIAL…VIAD), 280–300 (LYFD…FFNI), 352–372 (LILV…FIIW), 397–417 (MPKI…WVFF), 463–483 (IMYA…SFCL), and 505–525 (LLLS…FLYF). The active site involves H363.

This sequence belongs to the membrane-bound acyltransferase family.

It localises to the cell membrane. Its function is as follows. Catalyzes the O-acetylation of peptidoglycan (PG), an important mechanism that appears to confer lysozyme resistance and contributes to pathogen persistence in the host. This is Peptidoglycan O-acetyltransferase (patA) from Helicobacter pylori (strain ATCC 700392 / 26695) (Campylobacter pylori).